Consider the following 795-residue polypeptide: Plakophilin-2 (795 aa).

A required for binding to single-stranded DNA region spans residues 1-318; the sequence is MAVPGSLAEC…MTLERAVNML (318 aa). Position 44 is a phosphoserine (Ser-44). An Omega-N-methylarginine modification is found at Arg-46. A phosphoserine mark is found at Ser-82, Ser-132, Ser-135, Ser-151, Ser-154, Ser-155, Ser-172, Ser-188, and Ser-232. 2 disordered regions span residues 197 to 233 and 245 to 274; these read GTARRPPGCGSFSDAVFDNGPLKPTMPTHPPGTSHSA and SQARLQSTQSRTARSSWPRSSVRSSLREPG. The span at 245–257 shows a compositional bias: polar residues; sequence SQARLQSTQSRTA. Positions 258–268 are enriched in low complexity; that stretch reads RSSWPRSSVRS. Phosphoserine is present on residues Ser-265 and Ser-287. 8 ARM repeats span residues 299–339, 343–382, 385–425, 484–530, 585–625, 633–672, 677–718, and 721–763; these read DAQL…QHES, SEARKRVNQLRGIPKLLQLLKLQNEDVQRAACGALRNLVF, NDNK…NLSS, PDGR…NLSY, PHGI…NLTA, LVARMVVQKENGLQHTRKMLHVGDPSVKKTAVSLLRNLSR, QNEI…NLMQ, and YQNA…SLWA.

It belongs to the beta-catenin family. In terms of assembly, interacts with DSC2. Interacts with JUP. Interacts with KRT5/CK5, KRT8/CK8, KRT14/CK14, KRT18/CK18 and VIM. Interacts (via N-terminus) with MARK3/C-TAK1. Interacts with DSP. Interacts with DSG1, DSG2 and DSG3. Interacts (via N-terminus) with CTNNB1. Interacts with CDH1. Interacts with the RNA polymerase III (Pol III) complex proteins POLR3A/RPC155, POLR3F/RPC39 and POLR3C/RPC82. Interacts with CTNNA3. Interacts (via N-terminus) with SCN5A/Nav1.5. Interacts with ANK3/ANKG and GJA1/CX43. Expressed in cardiomyocytes in the heart (at protein level).

Its subcellular location is the nucleus. It localises to the cell junction. It is found in the desmosome. The protein resides in the cytoplasm. Functionally, a component of desmosome cell-cell junctions which are required for positive regulation of cellular adhesion. Regulates focal adhesion turnover resulting in changes in focal adhesion size, cell adhesion and cell spreading, potentially via transcriptional modulation of beta-integrins. Required to maintain gingival epithelial barrier function. Important component of the desmosome that is also required for localization of desmosome component proteins such as DSC2, DSG2 and JUP to the desmosome cell-cell junction. Required for the formation of desmosome cell junctions in cardiomyocytes, thereby required for the correct formation of the heart, specifically trabeculation and formation of the atria walls. Loss of desmosome cell junctions leads to mis-localization of DSP and DSG2 resulting in disruption of cell-cell adhesion and disordered intermediate filaments. Modulates profibrotic gene expression in cardiomyocytes via regulation of DSP expression and subsequent activation of downstream TGFB1 and MAPK14/p38 MAPK signaling. Required for cardiac sodium current propagation and electrical synchrony in cardiac myocytes, via ANK3 stabilization and modulation of SCN5A/Nav1.5 localization to cell-cell junctions. Required for mitochondrial function, nuclear envelope integrity and positive regulation of SIRT3 transcription via maintaining DES localization at its nuclear envelope and cell tip anchoring points, and thereby preserving regulation of the transcriptional program. Maintenance of nuclear envelope integrity protects against DNA damage and transcriptional dysregulation of genes, especially those involved in the electron transport chain, thereby preserving mitochondrial function and protecting against superoxide radical anion generation. Binds single-stranded DNA (ssDNA). May regulate the localization of GJA1 to gap junctions in intercalated disks of the heart. This chain is Plakophilin-2, found in Mus musculus (Mouse).